We begin with the raw amino-acid sequence, 160 residues long: Class B acid phosphatase (160 aa).

The first 23 residues, 1-23, serve as a signal peptide directing secretion; that stretch reads MRKVTLTLSAIALALSLNGAAMA. The active-site Nucleophile is D69. Mg(2+) contacts are provided by D69 and D71. Residue D71 is the Proton donor of the active site. Residue 137–138 participates in substrate binding; the sequence is TG.

This sequence belongs to the class B bacterial acid phosphatase family. As to quaternary structure, homotetramer. Mg(2+) serves as cofactor.

It localises to the periplasm. It carries out the reaction a phosphate monoester + H2O = an alcohol + phosphate. Dephosphorylates several organic phosphate monoesters. Also has a phosphotransferase activity catalyzing the transfer of low-energy phosphate groups from organic phosphate monoesters to free hydroxyl groups of various organic compounds. This Proteus mirabilis protein is Class B acid phosphatase (aphA).